The following is a 286-amino-acid chain: Small ribosomal subunit protein uS15m (286 aa).

A mitochondrion-targeting transit peptide spans 1–33 (MSIVGRNAILNLRISLCPLFMGKRSFVSSPVSN).

Belongs to the universal ribosomal protein uS15 family. Component of the mitochondrial small ribosomal subunit (mt-SSU). Mature yeast 74S mitochondrial ribosomes consist of a small (37S) and a large (54S) subunit. The 37S small subunit contains a 15S ribosomal RNA (15S mt-rRNA) and 34 different proteins. The 54S large subunit contains a 21S rRNA (21S mt-rRNA) and 46 different proteins. The precursor is processed in two steps involving mitochondrial intermediate peptidase (MIP) and mitochondrial processing peptidase (MPP).

Its subcellular location is the mitochondrion. Its function is as follows. Component of the mitochondrial ribosome (mitoribosome), a dedicated translation machinery responsible for the synthesis of mitochondrial genome-encoded proteins, including at least some of the essential transmembrane subunits of the mitochondrial respiratory chain. The mitoribosomes are attached to the mitochondrial inner membrane and translation products are cotranslationally integrated into the membrane. The sequence is that of Small ribosomal subunit protein uS15m (MRPS28) from Saccharomyces cerevisiae (strain ATCC 204508 / S288c) (Baker's yeast).